The chain runs to 156 residues: Regulatory protein RecX (156 aa).

It belongs to the RecX family.

The protein localises to the cytoplasm. Functionally, modulates RecA activity. The protein is Regulatory protein RecX of Pseudomonas putida (strain GB-1).